Consider the following 158-residue polypeptide: uncharacterized protein (158 aa).

2 disordered regions span residues 1–86 (MDFR…DHWW) and 138–158 (ASQV…LLGF). The segment covering 7 to 76 (SPTTCTTPAS…PTPASSGSAA (70 aa)) has biased composition (low complexity).

This is an uncharacterized protein from Homo sapiens (Human).